Reading from the N-terminus, the 263-residue chain is Putative TATA-binding protein pB263R (263 aa).

It belongs to the asfivirus B263R family.

In terms of biological role, putative TATA-binding protein. This is Putative TATA-binding protein pB263R from Ornithodoros (relapsing fever ticks).